The following is a 1251-amino-acid chain: MANVRDSDTSLWLHNKLGTSNDSWINGSICSQLNKEVLRNIKECFPDLQTQVKLKLLLSFLHIPRRLVEEWKAELEEVIEVAGLDSELWVSMLAETMKTFPATSSLNTEISDYEDTRPIFIDMVNDLRKLVTKHSDLGMLPLECQYLNKNALISVVGQQPAPVKHFTLKRKPKSAQLRTELLHKSADAQSSLKKASAPTIPLRSRGMPRKMTDTTPLKGIPSRMPTTGFRSATVPGNAAQRPNLSRTPAGRKDGGIKLIEFTEQPLGYAAAKKRKREQQLEEQQKKQEQKQQQAAAAAAAAATAAASNAGDSSPTDAATASGGETPVTPTSANNSFEIKMEPQQLNQSAGSLEEPQDDEMSGKANMECDIETPEYATATLDFAQATSTSVADGQPGKPAVETKLKTPRTPKSAAKLNNNNNNNNNNSFNHTPKRIKQEIEIKSEEIIVPASIKLEKIETSPSTQRVSIQQQPPSLVQRTPHLLIRSSPQKRQNNGATTSAGTTTTTVGNTTIKMEKLDIKPMIRATGVSPSTSAGTTTTLLTPQQLRQAANPLANLPNNISVKITSAKAKAAAAAAATSSGSQTQSQQPQTLQVQQAPQQSHPPLLINSSTPVILASSPSAQRAKALALPSSSTSATTTTTIPSQAIKTMPLSQLKTATNSGPVIISQTIIQPAKRAQQQAGTSSAAAASQQQQQQQSQQQLLHQQIQQQTQQQAQLPQQPQQQQTQYILATPQQQPQQIQQQQQQQQPILPTLTSFSHSRPMPQTTTLYQATTPSGSGQTPTKILLKTSGSSSVVMTPLRQAQPQQATAVVSSNPPPLVATSAAVVSPGQTTLNIQNVQLPNRPVTIQPASQAAQQQHMQAQLQQQQPHPQHTIVANTTATQQPKLSQVLMQPTAAVGTSGVSALNVSPTSGKNKTIILTQKGVILRNIGGDMYQQIPISNVGNMQGLGGTTLMTTTAGPPSLVKTTPSSGVQLQQQQSGKQILPTLIPTSSLGGQHVIVQQQQPTNVIGNSQQQTIIRPVMTNVGGGLTTLPQGLTLIQRPGQQPQLVQVQAAPGSTQRTIITQSNTAAAASQQQPRQQQQQILVQHKPAPTLQQRLVTSTTSGGQGQQGNPNAGLPRTVQVQVQAQQQQQPQQQQATQQQSQQAPQRRGLSLSNEHVHKAHEMFRKANRVSRPDKALILGFMAGLRENPRPNNENVLVIKLGETEEKVQQDNGHTALCLVESHIRLDYNTGEWKTFQNYRLQDQSAAS.

The HDAg domain maps to 89-254 (WVSMLAETMK…SRTPAGRKDG (166 aa)). Residues 128 to 191 (RKLVTKHSDL…LHKSADAQSS (64 aa)) form an NELF-C/D-binding region. 8 disordered regions span residues 185–256 (SADA…DGGI), 269–333 (AAAK…TSAN), 343–362 (QQLN…EMSG), 387–430 (STSV…SFNH), 484–509 (IRSS…TVGN), 578–607 (TSSG…PLLI), 852–872 (SQAA…PHPQ), and 1099–1154 (LVTS…RGLS). An RNAPII-binding region spans residues 192-254 (LKKASAPTIP…SRTPAGRKDG (63 aa)). Residues 277–289 (EQQLEEQQKKQEQ) are compositionally biased toward basic and acidic residues. Residues 290 to 306 (KQQQAAAAAAAAATAAA) are compositionally biased toward low complexity. Residues 309 to 318 (AGDSSPTDAA) show a composition bias toward polar residues. Composition is skewed to low complexity over residues 417 to 426 (NNNNNNNNNN), 493 to 509 (NNGA…TVGN), and 578 to 600 (TSSG…APQQ). The span at 1119–1151 (PRTVQVQVQAQQQQQPQQQQATQQQSQQAPQRR) shows a compositional bias: low complexity.

It belongs to the NELF-A family. Component of the NELF complex. Interacts with Clamp.

It is found in the nucleus. The protein resides in the chromosome. Functionally, essential component of the NELF complex, a complex that negatively regulates the elongation of transcription by RNA polymerase II. Has an essential role in postembryonic development. The polypeptide is Negative elongation factor A (Nelf-A) (Drosophila melanogaster (Fruit fly)).